The sequence spans 1271 residues: Zinc finger transcription factor Trps1 (1271 aa).

Disordered stretches follow at residues 1 to 76 and 124 to 155; these read MVRK…DSAS and SPIK…DMSP. Polar residues predominate over residues 34–49; the sequence is SKEISTDPMQENSEQS. The span at 54–65 shows a compositional bias: basic and acidic residues; that stretch reads HNSDDHSFHDQE. Residues 66-76 show a composition bias toward polar residues; sequence PSSSINKDSAS. The C2H2-type 1; atypical zinc-finger motif lies at 217-242; that stretch reads FKCNICGYGYYGNDPTDLIKHFRKYH. Residues 328–353 form a C2H2-type 2; atypical zinc finger; it reads FRCKFCNFTYLAKSATELEQHFLKTH. The tract at residues 353–387 is disordered; it reads HPNKMKMSSDSGKPSEKSTNKSSPIPRSCEPGDLG. The C2H2-type 3; atypical zinc-finger motif lies at 426–451; sequence YWCKFCSFSCESSSNSKLLEHHSKQH. The C2H2-type 4; atypical zinc finger occupies 513–543; that stretch reads YNCQFCDFRYSKSHGPEVILVGPLLRHYQQH. 3 consecutive C2H2-type zinc fingers follow at residues 604 to 627, 656 to 679, and 682 to 705; these read HQCD…ENAH, HSCT…RRVH, and YKCR…NSAH. The tract at residues 843 to 877 is disordered; that stretch reads GVTAGASGEKSGQHTPQYPTAGDSKSKDESQSLLR. The segment at 886–910 adopts a GATA-type zinc-finger fold; that stretch reads CANCLTTKTSLWRKNANGGYVCNAC. Disordered stretches follow at residues 938–987, 1031–1064, and 1154–1196; these read RTRK…RENQ, SPQE…YMRP, and LDLA…EKSD. Basic and acidic residues predominate over residues 972-985; the sequence is IRSEDHSMEGHQRE. The segment covering 1031–1049 has biased composition (low complexity); it reads SPQESSGEPGNSSSVSDGK. 2 stretches are compositionally biased toward basic and acidic residues: residues 1050–1062 and 1170–1196; these read GSSE…EKYM and DSKE…EKSD. A transcriptional repressor domain region spans residues 1153–1271; sequence PLDLAMKHSR…QAEKNGKNKD (119 aa). Residues lysine 1182 and lysine 1191 each participate in a glycyl lysine isopeptide (Lys-Gly) (interchain with G-Cter in SUMO) cross-link. C2H2-type zinc fingers lie at residues 1205-1227 and 1233-1257; these read TKCV…MSCH and FQCS…RGLH.

As to quaternary structure, binds specifically to GATA sequences. Sumoylated. Sumoylation in the repressor domain inhibits the transcription repression activity. Sumoylation on Lys-1191 is the major site. Appears to be sumoylated on multiple sites.

The protein localises to the nucleus. Transcriptional repressor. Represses expression of GATA-regulated genes at selected sites and stages in vertebrate development. The polypeptide is Zinc finger transcription factor Trps1 (trps1) (Xenopus laevis (African clawed frog)).